The following is a 254-amino-acid chain: Thiazole synthase (254 aa).

The Schiff-base intermediate with DXP role is filled by Lys-95. 1-deoxy-D-xylulose 5-phosphate-binding positions include Gly-156, 182–183 (AG), and 204–205 (NT).

The protein belongs to the ThiG family. As to quaternary structure, homotetramer. Forms heterodimers with either ThiH or ThiS.

It localises to the cytoplasm. It carries out the reaction [ThiS sulfur-carrier protein]-C-terminal-Gly-aminoethanethioate + 2-iminoacetate + 1-deoxy-D-xylulose 5-phosphate = [ThiS sulfur-carrier protein]-C-terminal Gly-Gly + 2-[(2R,5Z)-2-carboxy-4-methylthiazol-5(2H)-ylidene]ethyl phosphate + 2 H2O + H(+). Its pathway is cofactor biosynthesis; thiamine diphosphate biosynthesis. Functionally, catalyzes the rearrangement of 1-deoxy-D-xylulose 5-phosphate (DXP) to produce the thiazole phosphate moiety of thiamine. Sulfur is provided by the thiocarboxylate moiety of the carrier protein ThiS. In vitro, sulfur can be provided by H(2)S. The chain is Thiazole synthase from Shewanella sediminis (strain HAW-EB3).